A 127-amino-acid chain; its full sequence is Protein translocase subunit SecE (127 aa).

The next 3 membrane-spanning stretches (helical) occupy residues 16 to 36, 41 to 61, and 96 to 116; these read AMKW…NYLY, LPLR…VALL, and IVAA…GILV.

This sequence belongs to the SecE/SEC61-gamma family. In terms of assembly, component of the Sec protein translocase complex. Heterotrimer consisting of SecY, SecE and SecG subunits. The heterotrimers can form oligomers, although 1 heterotrimer is thought to be able to translocate proteins. Interacts with the ribosome. Interacts with SecDF, and other proteins may be involved. Interacts with SecA.

The protein localises to the cell inner membrane. Its function is as follows. Essential subunit of the Sec protein translocation channel SecYEG. Clamps together the 2 halves of SecY. May contact the channel plug during translocation. The polypeptide is Protein translocase subunit SecE (Salmonella typhi).